Here is a 482-residue protein sequence, read N- to C-terminus: Rho GTPase-activating protein 15 (482 aa).

A phosphoserine mark is found at serine 51, serine 111, serine 205, serine 208, and serine 250. The PH domain occupies methionine 87–aspartate 198. A Rho-GAP domain is found at serine 288–phenylalanine 477.

The protein resides in the cytoplasm. Its subcellular location is the membrane. Its function is as follows. GTPase activator for the Rho-type GTPases by converting them to an inactive GDP-bound state. Has activity toward RAC1. Overexpression results in an increase in actin stress fibers and cell contraction. This chain is Rho GTPase-activating protein 15 (Arhgap15), found in Rattus norvegicus (Rat).